We begin with the raw amino-acid sequence, 394 residues long: Flap endonuclease 1 (394 aa).

Residues 1–103 form an N-domain region; that stretch reads MGIKSLYQII…GELAKRTMRK (103 aa). Asp-34 lines the Mg(2+) pocket. Arg-69 contributes to the DNA binding site. Asp-85 serves as a coordination point for Mg(2+). The interval 102-123 is disordered; the sequence is RKAEAQEAAEEAKETGTAEDVE. Residues 121 to 252 form an I-domain region; sequence DVEKFSRRTV…NTALKMIRDH (132 aa). The Mg(2+) site is built by Glu-157, Glu-159, Asp-178, and Asp-180. DNA is bound at residue Glu-157. Gly-230 and Asp-232 together coordinate DNA. Position 232 (Asp-232) interacts with Mg(2+). The interval 340–348 is interaction with PCNA; the sequence is QQSRLEGFF. Residues 349–394 are disordered; that stretch reads KPVAKTEQQKATAKRKAEEKAELAKKKKKEDAKAKRAMGAKPRGAR. The segment covering 363–382 has biased composition (basic and acidic residues); that stretch reads RKAEEKAELAKKKKKEDAKA. Residues 383–394 are compositionally biased toward basic residues; sequence KRAMGAKPRGAR.

Belongs to the XPG/RAD2 endonuclease family. FEN1 subfamily. Interacts with PCNA. Three molecules of FEN1 bind to one PCNA trimer with each molecule binding to one PCNA monomer. PCNA stimulates the nuclease activity without altering cleavage specificity. Mg(2+) is required as a cofactor. Post-translationally, phosphorylated. Phosphorylation upon DNA damage induces relocalization to the nuclear plasma.

Its subcellular location is the nucleus. It localises to the nucleolus. The protein resides in the nucleoplasm. The protein localises to the mitochondrion. Structure-specific nuclease with 5'-flap endonuclease and 5'-3' exonuclease activities involved in DNA replication and repair. During DNA replication, cleaves the 5'-overhanging flap structure that is generated by displacement synthesis when DNA polymerase encounters the 5'-end of a downstream Okazaki fragment. It enters the flap from the 5'-end and then tracks to cleave the flap base, leaving a nick for ligation. Also involved in the long patch base excision repair (LP-BER) pathway, by cleaving within the apurinic/apyrimidinic (AP) site-terminated flap. Acts as a genome stabilization factor that prevents flaps from equilibrating into structures that lead to duplications and deletions. Also possesses 5'-3' exonuclease activity on nicked or gapped double-stranded DNA, and exhibits RNase H activity. Also involved in replication and repair of rDNA and in repairing mitochondrial DNA. This Arthroderma otae (strain ATCC MYA-4605 / CBS 113480) (Microsporum canis) protein is Flap endonuclease 1.